A 1601-amino-acid polypeptide reads, in one-letter code: PH and SEC7 domain-containing protein (1601 aa).

The tract at residues 1–340 (MSEELKVVLR…TGDLILNLSR (340 aa)) is mediates regulation of axon branching and microtubule organization. The 83-residue stretch at 6-88 (KVVLRRSEQH…LVTLELKRDP (83 aa)) folds into the PDZ domain. Disordered stretches follow at residues 113–192 (NIYD…SSTK), 211–322 (TSPT…PAKA), 339–440 (SRTP…SLTN), 459–657 (LEED…SSSG), 737–780 (NSSL…SETA), 872–965 (QQQQ…LLSC), and 1040–1126 (QQLK…SDVE). Residues 118 to 128 (HSSSTNSSPNH) show a composition bias toward polar residues. Positions 166 to 191 (ASGSTTTTTTATHTHSHSRNSSASST) are enriched in low complexity. The segment covering 283 to 297 (QSLQHSNSYSGSPVT) has biased composition (polar residues). Over residues 300–311 (RFADREPEREPE) the composition is skewed to basic and acidic residues. Positions 323 to 340 (PRFEAYMMTGDLILNLSR) match the Microtubule elimination domain (MTED); Binds tubulin and blocks microtubule polymerization motif. The segment covering 339 to 348 (SRTPQTSNPL) has biased composition (polar residues). Residues 353–362 (KKIDSLRDSP) are compositionally biased toward basic and acidic residues. Low complexity-rich tracts occupy residues 382–399 (SSPT…TSSD), 409–424 (QKQQ…QQQQ), and 468–487 (QRQQ…YEYY). A compositionally biased stretch (acidic residues) spans 488-505 (QNEDELEEQEEVEEEREE). A compositionally biased stretch (polar residues) spans 510–519 (YDITNIETYQ). The span at 526–557 (DDDDSDRQCLVDDDDDDDAYDDEENDAGDEDY) shows a compositional bias: acidic residues. Polar residues-rich tracts occupy residues 558-567 (STNSLGSGSA) and 617-630 (TSFS…SLST). Positions 640–657 (SVPTSPEPSSLVPESSSG) are enriched in low complexity. Positions 737–747 (NSSLASNNNEG) are enriched in polar residues. Low complexity-rich tracts occupy residues 752-780 (NRSS…SETA), 872-942 (QQQQ…QQQQ), 949-965 (GGQV…LLSC), and 1040-1052 (QQLK…QQQQ). The tract at residues 894 to 1601 (SSSPQHSAVG…PTNRKEKKKK (708 aa)) is mediates association to the membrane and rescricts the microtubule-inhibiting activity to the cell cortex. A compositionally biased stretch (basic and acidic residues) spans 1053-1071 (QRERERDRDRDREQSEHKV). The SEC7 domain maps to 1125–1291 (VESLHSYHYS…KSLYQAIKTK (167 aa)). The PH domain maps to 1332 to 1445 (VEYKKGYVMR…WVETINYVCA (114 aa)). The disordered stretch occupies residues 1544-1601 (LELQAQQPSPASHEEEADTFPVGTTACTPPTPQSINQKDQQKEQQQQQPTNRKEKKKK). Over residues 1568-1579 (TACTPPTPQSIN) the composition is skewed to polar residues.

It belongs to the PSD family. Interacts (via MTED motif) with tubulin. As to expression, expressed in the head (at protein level).

Its subcellular location is the cell projection. The protein resides in the axon. It localises to the cytoplasm. It is found in the cell membrane. The protein localises to the cell cortex. Functionally, guanine nucleotide exchange factor for Arf6. Regulates axon growth and branching by inhibiting microtubule polymerisation at the cortex. Together with shot, promotes axonal microtubule bundle integrity. Required for normal ethanol-induced tolerance and preference. Probably by activating Arf6, counteracts ethanol-induced sedation. The protein is PH and SEC7 domain-containing protein of Drosophila melanogaster (Fruit fly).